The sequence spans 722 residues: Probable C-mannosyltransferase DPY19L4 (722 aa).

Positions 1 to 34 (MAKEEGTSVEPRQRKKQRTSGSQEAKAEKIRRTP) are disordered. N-acetylalanine is present on A2. Basic and acidic residues predominate over residues 25 to 34 (AKAEKIRRTP). The next 12 membrane-spanning stretches (helical) occupy residues 51–71 (IVIGCLAAVISGMMHVFYLSA), 160–177 (VYFYIGIVFGLQGMYVTA), 183–201 (WLMSGTWLAGMLTVAWFLI), 246–262 (FCYLLLSTSTYTFMMVW), 268–284 (VLFLQAVSLLLLDIFSV), 291–307 (YEVYKVYIFSLFLGYLL), 313–331 (ALLVSPLLSLVGAFMLVKC), 351–369 (FYLLCTLPVTLNLIVKMFV), 420–440 (LLPFYVLVLIICLLSMTQVFF), 465–485 (IIYHVIHTLLLGSLAMLMEGL), 487–507 (FIWTPYVCMLAAFGVCSPELW), and 521–541 (PMLLALILSMAVPTIIGLSLW).

This sequence belongs to the dpy-19 family.

It is found in the membrane. Functionally, probable C-mannosyltransferase that mediates C-mannosylation of tryptophan residues on target proteins. This is Probable C-mannosyltransferase DPY19L4 (Dpy19l4) from Mus musculus (Mouse).